The following is a 673-amino-acid chain: Forkhead box protein O3 (673 aa).

Positions 1–153 are disordered; it reads MAEAPASPAP…SGQPRKCSSR (153 aa). At Ser30 the chain carries Phosphoserine; by AMPK. Phosphothreonine; by PKB/AKT1 is present on Thr32. The residue at position 46 (Lys46) is an N6-methyllysine. Residues 57–68 show a composition bias toward acidic residues; that stretch reads IPEEEDDEDDED. Over residues 79–89 the composition is skewed to gly residues; it reads IGGGGGSGTLG. The required for mitochondrial import stretch occupies residues 80–108; that stretch reads GGGGGSGTLGSGLLLEDSARVLAPGGQDP. Lys149 carries the N6-methyllysine modification. Positions 157 to 251 form a DNA-binding region, fork-head; it reads WGNLSYADLI…KSGKAPRRRA (95 aa). Thr179 is modified (phosphothreonine; by AMPK). Phosphoserine; by STK4/MST1 is present on Ser209. A Phosphoserine; by MAPKAPK5 modification is found at Ser215. Lys230 carries the post-translational modification N6-methyllysine. The interval 231-302 is disordered; the sequence is SSWWIINPDG…GSPTSRSSDE (72 aa). Lys242 bears the N6-acetyllysine mark. Positions 242 to 259 match the Nuclear localization signal motif; sequence KSGKAPRRRAVSMDNSNK. Ser253 carries the post-translational modification Phosphoserine; by PKB/AKT1 and MAPKAPK5. The segment covering 261 to 272 has biased composition (basic residues); that stretch reads TKSRGRAAKKKA. An N6-methyllysine mark is found at Lys262 and Lys271. Phosphoserine occurs at positions 280 and 284. The segment covering 283–298 has biased composition (polar residues); that stretch reads DSPSQLSKWPGSPTSR. Lys290 carries the post-translational modification N6-methyllysine. Ser294 is modified (phosphoserine). Phosphoserine; by CaMK2A is present on Ser299. Positions 300–673 are mediates interaction with CHUK/IKKA and IKBKB/IKKB; it reads SDELDAWTDF…QASSQSWVPG (374 aa). Phosphoserine is present on Ser311. Position 315 is a phosphoserine; by SGK1 (Ser315). A phosphoserine; by AMPK mark is found at Ser399 and Ser413. An N6-methyllysine modification is found at Lys419. Ser421 carries the phosphoserine modification. The interval 536 to 587 is disordered; that stretch reads HQHQTQGALGGSRALSNSVSNMGLSESSSLGSAKHQQQSPVSQSMQTLSDSL. Polar residues predominate over residues 549–582; sequence ALSNSVSNMGLSESSSLGSAKHQQQSPVSQSMQT. Ser551 carries the post-translational modification Phosphoserine; by MAPKAPK5. At Ser555 the chain carries Phosphoserine; by AMPK and MAPKAPK5. Phosphoserine; by AMPK is present on residues Ser588 and Ser626. Ser644 carries the phosphoserine; by IKKB modification.

As to quaternary structure, upon metabolic stress, forms a complex composed of FOXO3, SIRT3 and mitochondrial RNA polymerase POLRMT; the complex is recruited to mtDNA in a SIRT3-dependent manner. Also forms a complex composed of FOXO3, SIRT3, TFAM and POLRMT. Interacts with SIRT2; the interaction occurs independently of SIRT2 deacetylase activity. Interacts with YWHAB/14-3-3-beta and YWHAZ/14-3-3-zeta, which are required for cytosolic sequestration. Upon oxidative stress, interacts with STK4/MST1, which disrupts interaction with YWHAB/14-3-3-beta and leads to nuclear translocation. Interacts with PIM1. Interacts with DDIT3/CHOP. Interacts (deacetylated form) with SKP2. Interacts with CHUK and IKBKB. Interacts with CAMK2A, CAMK2B and calcineurin A. Interacts with NUPR1; this interaction represses FOXO3 transactivation. In terms of processing, in the presence of survival factors such as IGF1, phosphorylated on Thr-32 and Ser-253 by AKT1/PKB. This phosphorylated form then interacts with 14-3-3 proteins and is retained in the cytoplasm. Survival factor withdrawal induces dephosphorylation and promotes translocation to the nucleus where the dephosphorylated protein induces transcription of target genes and triggers apoptosis. Although AKT1/PKB doesn't appear to phosphorylate Ser-315 directly, it may activate other kinases that trigger phosphorylation at this residue. Phosphorylated by STK4/MST1 on Ser-209 upon oxidative stress, which leads to dissociation from YWHAB/14-3-3-beta and nuclear translocation. Phosphorylated by PIM1. Phosphorylation by AMPK leads to the activation of transcriptional activity without affecting subcellular localization. In response to metabolic stress, phosphorylated by AMPK on Ser-30 which mediates FOXO3 mitochondrial translocation. Phosphorylation by MAPKAPK5 promotes nuclear localization and DNA-binding, leading to induction of miR-34b and miR-34c expression, 2 post-transcriptional regulators of MYC that bind to the 3'UTR of MYC transcript and prevent its translation. Phosphorylated by CHUK/IKKA and IKBKB/IKKB. TNF-induced inactivation of FOXO3 requires its phosphorylation at Ser-644 by IKBKB/IKKB which promotes FOXO3 retention in the cytoplasm, polyubiquitination and ubiquitin-mediated proteasomal degradation. May be dephosphorylated by calcineurin A on Ser-299 which abolishes FOXO3 transcriptional activity. In cancer cells, ERK mediated-phosphorylation of Ser-12 is required for mitochondrial translocation of FOXO3 in response to metabolic stress or chemotherapeutic agents. Phosphorylation at Ser-253 promotes its degradation by the proteasome. Dephosphorylation at Ser-253 by protein phosphatase 2A (PPP2CA) promotes its stabilization; interaction with PPP2CA is enhanced by AMBRA1. Deacetylation by SIRT1 or SIRT2 stimulates interaction of FOXO3 with SKP2 and facilitates SCF(SKP2)-mediated FOXO3 ubiquitination and proteasomal degradation. Deacetylation by SIRT2 stimulates FOXO3-mediated transcriptional activity in response to oxidative stress. Deacetylated by SIRT3. Deacetylation by SIRT3 stimulates FOXO3-mediated mtDNA transcriptional activity in response to metabolic stress. Post-translationally, heavily methylated by SET9 which decreases stability, while moderately increasing transcriptional activity. The main methylation site is Lys-271. Methylation doesn't affect subcellular location. In terms of processing, polyubiquitinated. Ubiquitinated by a SCF complex containing SKP2, leading to proteasomal degradation. The N-terminus is cleaved following import into the mitochondrion. As to expression, ubiquitous.

It localises to the cytoplasm. It is found in the cytosol. The protein resides in the nucleus. The protein localises to the mitochondrion matrix. Its subcellular location is the mitochondrion outer membrane. Functionally, transcriptional activator that recognizes and binds to the DNA sequence 5'-[AG]TAAA[TC]A-3' and regulates different processes, such as apoptosis and autophagy. Acts as a positive regulator of autophagy in skeletal muscle: in starved cells, enters the nucleus following dephosphorylation and binds the promoters of autophagy genes, such as GABARAP1L, MAP1LC3B and ATG12, thereby activating their expression, resulting in proteolysis of skeletal muscle proteins. Triggers apoptosis in the absence of survival factors, including neuronal cell death upon oxidative stress. Participates in post-transcriptional regulation of MYC: following phosphorylation by MAPKAPK5, promotes induction of miR-34b and miR-34c expression, 2 post-transcriptional regulators of MYC that bind to the 3'UTR of MYC transcript and prevent its translation. In response to metabolic stress, translocates into the mitochondria where it promotes mtDNA transcription. In response to metabolic stress, translocates into the mitochondria where it promotes mtDNA transcription. Also acts as a key regulator of chondrogenic commitment of skeletal progenitor cells in response to lipid availability: when lipids levels are low, translocates to the nucleus and promotes expression of SOX9, which induces chondrogenic commitment and suppresses fatty acid oxidation. Also acts as a key regulator of regulatory T-cells (Treg) differentiation by activating expression of FOXP3. The polypeptide is Forkhead box protein O3 (Homo sapiens (Human)).